The following is a 150-amino-acid chain: D-aminoacyl-tRNA deacylase (150 aa).

The Gly-cisPro motif, important for rejection of L-amino acids signature appears at 138–139 (GP).

It belongs to the DTD family. As to quaternary structure, homodimer.

The protein localises to the cytoplasm. The catalysed reaction is glycyl-tRNA(Ala) + H2O = tRNA(Ala) + glycine + H(+). It catalyses the reaction a D-aminoacyl-tRNA + H2O = a tRNA + a D-alpha-amino acid + H(+). An aminoacyl-tRNA editing enzyme that deacylates mischarged D-aminoacyl-tRNAs. Also deacylates mischarged glycyl-tRNA(Ala), protecting cells against glycine mischarging by AlaRS. Acts via tRNA-based rather than protein-based catalysis; rejects L-amino acids rather than detecting D-amino acids in the active site. By recycling D-aminoacyl-tRNA to D-amino acids and free tRNA molecules, this enzyme counteracts the toxicity associated with the formation of D-aminoacyl-tRNA entities in vivo and helps enforce protein L-homochirality. In Cytophaga hutchinsonii (strain ATCC 33406 / DSM 1761 / CIP 103989 / NBRC 15051 / NCIMB 9469 / D465), this protein is D-aminoacyl-tRNA deacylase.